The following is a 396-amino-acid chain: 3-hydroxykynurenine transaminase (396 aa).

The interval 43–44 (SN) is binds to and confers specificity for 3-hydroxykynurenine; shared with dimeric partner. Pyridoxal 5'-phosphate contacts are provided by residues 77–79 (SAH), Ser154, and Gln204. Ser154 serves as a coordination point for substrate. Lys205 is subject to N6-(pyridoxal phosphate)lysine. Residues Tyr256 and Thr259 each contribute to the pyridoxal 5'-phosphate site. Substrate is bound at residue Arg356.

It belongs to the class-V pyridoxal-phosphate-dependent aminotransferase family. In terms of assembly, homodimer. It depends on pyridoxal 5'-phosphate as a cofactor. As to expression, expressed in gut and ovaries.

The protein resides in the peroxisome. It catalyses the reaction L-kynurenine + glyoxylate = kynurenate + glycine + H2O. It carries out the reaction 3-hydroxy-L-kynurenine + glyoxylate = xanthurenate + glycine + H2O. The catalysed reaction is 3-hydroxy-L-kynurenine + pyruvate = xanthurenate + L-alanine + H2O. The enzyme catalyses glyoxylate + L-alanine = glycine + pyruvate. The protein operates within amino-acid degradation; L-kynurenine degradation; kynurenate from L-kynurenine: step 1/2. Functionally, catalyzes the pyridoxal 5'-phosphate-dependent transamination of both 3-hydroxykynurenine and L-kynurenine to xanthurenic acid and kynurenic acid, respectively, preferentially using the alpha-ketoacid glyoxylate as the amino group acceptor. Although glyoxylate is the preferred amino group acceptor, transamination of 3-hydroxykynurenine also works with pyruvate as the amino acceptor in vitro. Involved in the detoxification of cytotoxic metabolite 3-hydroxykynurenine generated by the hydroxylation of L-kynurenine, an intermediate in the tryptophan catabolism pathway. The Plasmodium parasite uses xanthurenic acid produced in the midgut to activate its gametocytes ingested during a blood meal. Also catalyzes, although with a lesser efficiency, the transamination of alanine with glyoxylate as an amino group acceptor. May play a role in the detoxification of glyoxylate, a toxic plant metabolite from the diet. The protein is 3-hydroxykynurenine transaminase of Anopheles gambiae (African malaria mosquito).